The chain runs to 311 residues: D-alanine--D-alanine ligase (311 aa).

The 202-residue stretch at 105 to 306 (KQLYIHAGLP…FSALLDRLIE (202 aa)) folds into the ATP-grasp domain. Residue 133-188 (ADRLGLPVVVKPEHEGSSIGLSIVRNRDQLAAAVETGWQYDRRCLIEKYVHGIEIT) coordinates ATP. Mg(2+) is bound by residues Asp261, Glu273, and Asn275.

The protein belongs to the D-alanine--D-alanine ligase family. Mg(2+) is required as a cofactor. Requires Mn(2+) as cofactor.

The protein resides in the cytoplasm. The catalysed reaction is 2 D-alanine + ATP = D-alanyl-D-alanine + ADP + phosphate + H(+). The protein operates within cell wall biogenesis; peptidoglycan biosynthesis. Its function is as follows. Cell wall formation. In Syntrophobacter fumaroxidans (strain DSM 10017 / MPOB), this protein is D-alanine--D-alanine ligase.